The following is a 369-amino-acid chain: UDP-N-acetylglucosamine--N-acetylmuramyl-(pentapeptide) pyrophosphoryl-undecaprenol N-acetylglucosamine transferase (369 aa).

UDP-N-acetyl-alpha-D-glucosamine contacts are provided by residues 15 to 17 (TGG), asparagine 126, arginine 169, serine 197, and glutamine 299.

The protein belongs to the glycosyltransferase 28 family. MurG subfamily.

It localises to the cell inner membrane. The enzyme catalyses di-trans,octa-cis-undecaprenyl diphospho-N-acetyl-alpha-D-muramoyl-L-alanyl-D-glutamyl-meso-2,6-diaminopimeloyl-D-alanyl-D-alanine + UDP-N-acetyl-alpha-D-glucosamine = di-trans,octa-cis-undecaprenyl diphospho-[N-acetyl-alpha-D-glucosaminyl-(1-&gt;4)]-N-acetyl-alpha-D-muramoyl-L-alanyl-D-glutamyl-meso-2,6-diaminopimeloyl-D-alanyl-D-alanine + UDP + H(+). It functions in the pathway cell wall biogenesis; peptidoglycan biosynthesis. Its function is as follows. Cell wall formation. Catalyzes the transfer of a GlcNAc subunit on undecaprenyl-pyrophosphoryl-MurNAc-pentapeptide (lipid intermediate I) to form undecaprenyl-pyrophosphoryl-MurNAc-(pentapeptide)GlcNAc (lipid intermediate II). The protein is UDP-N-acetylglucosamine--N-acetylmuramyl-(pentapeptide) pyrophosphoryl-undecaprenol N-acetylglucosamine transferase of Methylorubrum extorquens (strain PA1) (Methylobacterium extorquens).